The chain runs to 353 residues: Putative ABC transporter ATP-binding protein MG303 homolog (353 aa).

The ABC transporter domain maps to 72–312 (LYFYNLSVFV…MQLLQRYEIT (241 aa)). 107–114 (GPSGSGKT) lines the ATP pocket.

This sequence belongs to the ABC transporter superfamily.

The chain is Putative ABC transporter ATP-binding protein MG303 homolog from Mycoplasma pneumoniae (strain ATCC 29342 / M129 / Subtype 1) (Mycoplasmoides pneumoniae).